We begin with the raw amino-acid sequence, 232 residues long: Putative caffeoyl-CoA O-methyltransferase At1g67980 (232 aa).

Lysine 8 contributes to the substrate binding site. Residues valine 52, glutamate 74, 76-77 (GV), serine 82, and aspartate 100 each bind S-adenosyl-L-methionine. Aspartate 149 provides a ligand contact to substrate. An a divalent metal cation-binding site is contributed by aspartate 149. Aspartate 151 serves as a coordination point for S-adenosyl-L-methionine. Positions 175 and 176 each coordinate a divalent metal cation.

This sequence belongs to the class I-like SAM-binding methyltransferase superfamily. Cation-dependent O-methyltransferase family. CCoAMT subfamily. Requires a divalent metal cation as cofactor.

The catalysed reaction is (E)-caffeoyl-CoA + S-adenosyl-L-methionine = (E)-feruloyl-CoA + S-adenosyl-L-homocysteine + H(+). It functions in the pathway aromatic compound metabolism; phenylpropanoid biosynthesis. Functionally, methylates caffeoyl-CoA to feruloyl-CoA and 5-hydroxyferuloyl-CoA to sinapoyl-CoA. Plays a role in the synthesis of feruloylated polysaccharides. Involved in the reinforcement of the plant cell wall. Also involved in the responding to wounding or pathogen challenge by the increased formation of cell wall-bound ferulic acid polymers. The sequence is that of Putative caffeoyl-CoA O-methyltransferase At1g67980 from Arabidopsis thaliana (Mouse-ear cress).